The following is a 195-amino-acid chain: Dephospho-CoA kinase (195 aa).

Residues 4 to 195 enclose the DPCK domain; sequence IIGLTGGIAS…EQILDALQRL (192 aa). 12-17 lines the ATP pocket; it reads ASGKST.

The protein belongs to the CoaE family.

The protein localises to the cytoplasm. The enzyme catalyses 3'-dephospho-CoA + ATP = ADP + CoA + H(+). It functions in the pathway cofactor biosynthesis; coenzyme A biosynthesis; CoA from (R)-pantothenate: step 5/5. Functionally, catalyzes the phosphorylation of the 3'-hydroxyl group of dephosphocoenzyme A to form coenzyme A. The sequence is that of Dephospho-CoA kinase from Streptococcus agalactiae serotype Ia (strain ATCC 27591 / A909 / CDC SS700).